The following is a 76-amino-acid chain: CLAVATA3/ESR (CLE)-related protein 46 (76 aa).

The first 26 residues, methionine 1 to cysteine 26, serve as a signal peptide directing secretion. The disordered stretch occupies residues glutamate 53–histidine 76. Residues proline 61 and proline 64 each carry the hydroxyproline modification. An O-linked (Ara...) hydroxyproline glycan is attached at proline 64.

This sequence belongs to the CLV3/ESR signal peptide family. The O-glycosylation (arabinosylation) of the hydroxyproline Pro-64 enhances binding affinity of the CLE46p peptide for its receptor.

Its subcellular location is the secreted. It is found in the extracellular space. In terms of biological role, extracellular signal peptide that regulates cell fate. The protein is CLAVATA3/ESR (CLE)-related protein 46 of Arabidopsis thaliana (Mouse-ear cress).